Consider the following 835-residue polypeptide: Prickle-like protein 1-A (835 aa).

One can recognise a PET domain in the interval 14–122 (FGCQRSSTSD…NIKMLSRAVM (109 aa)). LIM zinc-binding domains are found at residues 124–188 (ATCE…ELLK), 189–249 (PRCS…HYAE), and 250–313 (YCES…EDVH). Disordered regions lie at residues 312–346 (VHASDSSDSAFQSARSRESRRSVRMGKSSRSADQC), 426–455 (LFQQPPEDNRSNDHWMSENIKGKNDLQRNN), 603–706 (CQEK…RKRS), and 769–835 (CSSS…CIIS). Basic and acidic residues-rich tracts occupy residues 432–453 (EDNRSNDHWMSENIKGKNDLQR), 603–614 (CQEKPPPEEKPM), and 646–655 (EIRRPPMSER). Basic residues-rich tracts occupy residues 669-683 (RPHHHHHHRRRKSRK) and 819-835 (SKSKKKKGHKGKNCIIS). Position 832 is a cysteine methyl ester (Cys-832). Cys-832 is lipidated: S-farnesyl cysteine. Positions 833 to 835 (IIS) are cleaved as a propeptide — removed in mature form.

It belongs to the prickle / espinas / testin family. As to quaternary structure, interacts with dvl2/dsh and mapk8/jnk1. As to expression, expressed in the dorsal marginal zone of early gastrulae (stage 10). As gastrulation proceeds, expression expands to include the lateral and ventral marginal zones, excluding the few rows of cells above the blastopore lip. Expression moves dorsally with gastrulation cell movements, and by the end of gastrulation expression is seen in dorsal mesoderm and posterior but not anterior neural ectoderm. Expression becomes down-regulated in mesoderm but remains strong in posterior ectoderm through the neurula stages. During tailbud stages, expressed in the pronephric duct, tailbud, tailtip and forming somites. In the most posterior regions, expressed in notochord and in the floorplate of the neural tube with weak expression in the roofplate. At stage 30, expressed in a complex pattern in the head including strong expression in the lens and otic vesicle.

The protein resides in the cell membrane. Its function is as follows. Acts in a planar cell polarity (PCP) complex; polarization along the apical/basal axis of epithelial cells. Regulates the polarized assembly of fibronectrin on the surface of the mesoderm during gastrulation. Essential for gastrulation cell movements, cooperating with dvl2/dsh to activate jnk. Acts together with tes to control axial elongation. The protein is Prickle-like protein 1-A (prickle1-a) of Xenopus laevis (African clawed frog).